Reading from the N-terminus, the 503-residue chain is MSEQTIRTRFAPSPTGYLHVGGLRTALYNFLFAKKNGGQFLLRLEDTDRARLVEGAVENLLSSLEWAGIIPDESPKHGGDFGPYVQSERLDIYKQYVQQLLDEKKAYYCFATPDELEESRQLQIKQGVQPKYNRKWLPEDMGGSMPQSEIQKRLDAGEPCVIRMKIPDHTRIRHDDIIRGIVWFDSSTVDDQVLMKSDGFPTYHLASVVDDHLMNITHVIRGEEWLSSTPKHLLLYDFFGWEKPEFAHLPLLLNPDRSKLSKRQGDVAVEDYMAKGYSKDALVNFVALLGWNEGEGVEQEVYSMNELIEKFTLEKVGKSGAVFNVEKLNWIQKQHLKLVSHEDLAKQAKAILVEKLKERESMMPSEKITDDAYLLNVVELMHDRVNFVHEFVTFSEYFFFEPEAYEEAAIKKRWKENTNDLLSEFKGILAGLDNFNSAAIEEALAKYAELKGVKNAALIHPIRLAVSGVSFGPSLYHLMEVIGKEACLRRIERAVDKLDYQEA.

The 'HIGH' region signature appears at 12–22 (PSPTGYLHVGG). Residues 259-263 (KLSKR) carry the 'KMSKS' region motif. Position 262 (lysine 262) interacts with ATP.

This sequence belongs to the class-I aminoacyl-tRNA synthetase family. Glutamate--tRNA ligase type 1 subfamily. In terms of assembly, monomer.

The protein localises to the cytoplasm. It catalyses the reaction tRNA(Glu) + L-glutamate + ATP = L-glutamyl-tRNA(Glu) + AMP + diphosphate. Catalyzes the attachment of glutamate to tRNA(Glu) in a two-step reaction: glutamate is first activated by ATP to form Glu-AMP and then transferred to the acceptor end of tRNA(Glu). The protein is Glutamate--tRNA ligase of Chloroherpeton thalassium (strain ATCC 35110 / GB-78).